Here is a 287-residue protein sequence, read N- to C-terminus: Proteasome assembly chaperone 1 (287 aa).

The interval 1 to 32 (MATFFGEVQSVFSRAVDEDDEEEEGEEEEEDR) is disordered. Over residues 17–32 (DEDDEEEEGEEEEEDR) the composition is skewed to acidic residues.

The protein belongs to the PSMG1 family. As to quaternary structure, forms a heterodimer with psmg2. Degraded by the proteasome upon completion of 20S proteasome maturation.

The protein resides in the cytoplasm. Its subcellular location is the endoplasmic reticulum. Its function is as follows. Chaperone protein which promotes assembly of the 20S proteasome as part of a heterodimer with psmg2. This chain is Proteasome assembly chaperone 1, found in Xenopus tropicalis (Western clawed frog).